The sequence spans 57 residues: Small hydrophobic protein (57 aa).

Over 1–8 (MPAIQPPL) the chain is Virion surface. The chain crosses the membrane as a helical span at residues 9–29 (YLTFLLLTLLYLIITLYVWTI). The Intravirion segment spans residues 30-57 (LTINHNTAVRYAALYQRSFSRWGFDQSL).

It belongs to the rubulavirus small hydrophobic protein family. As to quaternary structure, interacts with host TNFRSF1A, RIPK1 and IRAK1; these interactions interfere with host NF-kappa-B activation at the level of receptor complexes. Interacts with host protein UBQLN4.

It is found in the virion membrane. It localises to the host cell membrane. Functionally, plays a role in the inhibition of the host NF-kappa-B pathway. This inhibition occurs at the receptor level, by preventing the signaling of TNFR1 as well as IL-1R and TLR3. In Mumps virus genotype A (strain Jeryl-Lynn) (MuV), this protein is Small hydrophobic protein (SH).